A 210-amino-acid chain; its full sequence is LexA repressor (210 aa).

Residues 31 to 51 (RAEISRELGFRSPNAAEEHLK) constitute a DNA-binding region (H-T-H motif). Catalysis depends on for autocatalytic cleavage activity residues serine 126 and lysine 163.

It belongs to the peptidase S24 family. In terms of assembly, homodimer.

The catalysed reaction is Hydrolysis of Ala-|-Gly bond in repressor LexA.. Represses a number of genes involved in the response to DNA damage (SOS response), including recA and lexA. In the presence of single-stranded DNA, RecA interacts with LexA causing an autocatalytic cleavage which disrupts the DNA-binding part of LexA, leading to derepression of the SOS regulon and eventually DNA repair. This is LexA repressor from Actinobacillus succinogenes (strain ATCC 55618 / DSM 22257 / CCUG 43843 / 130Z).